Consider the following 635-residue polypeptide: Sodium- and chloride-dependent creatine transporter 1 (635 aa).

The segment at 1-28 (MAKKSAENGIYSVSGDEKKGPLIAPGPD) is disordered. Residues 1–60 (MAKKSAENGIYSVSGDEKKGPLIAPGPDGAPAKGDGPVGLGTPGGRLAVPPRETWTRQMD) lie on the Cytoplasmic side of the membrane. Phosphothreonine is present on T42. A helical membrane pass occupies residues 61–81 (FIMSCVGFAVGLGNVWRFPYL). Topologically, residues 82–87 (CYKNGG) are extracellular. Residues 88–108 (GVFLIPYVLIALVGGIPIFFL) traverse the membrane as a helical segment. At 109–138 (EISLGQFMKAGSINVWNICPLFKGLGYASM) the chain is on the cytoplasmic side. A helical transmembrane segment spans residues 139–159 (VIVFYCNTYYIMVLAWGFYYL). The Extracellular portion of the chain corresponds to 160–230 (VKSFTTTLPW…LSGGLEVPGA (71 aa)). 2 N-linked (GlcNAc...) asparagine glycosylation sites follow: N192 and N197. A helical membrane pass occupies residues 231–251 (LNWEVTLCLLACWVLVYFCVW). Topologically, residues 252–269 (KGVKSTGKIVYFTATFPY) are cytoplasmic. Residues 270–290 (VVLVVLLVRGVLLPGALDGII) traverse the membrane as a helical segment. At 291-304 (YYLKPDWSKLGSPQ) the chain is on the extracellular side. The chain crosses the membrane as a helical span at residues 305 to 325 (VWIDAGTQIFFSYAIGLGALT). At 326 to 341 (ALGSYNRFNNNCYKDA) the chain is on the cytoplasmic side. The chain crosses the membrane as a helical span at residues 342 to 362 (IILALINSGTSFFAGFVVFSI). Topologically, residues 363–394 (LGFMAAEQGVHISKVAESGPGLAFIAYPRAVT) are extracellular. The chain crosses the membrane as a helical span at residues 395–415 (LMPVAPLWAALFFFMLLLLGL). Residues 416–444 (DSQFVGVEGFITGLLDLLPASYYFRFQRE) lie on the Cytoplasmic side of the membrane. Residues 445–465 (ISVALCCALCFVIDLSMVTDG) traverse the membrane as a helical segment. At 466-479 (GMYVFQLFDYYSAS) the chain is on the extracellular side. A helical transmembrane segment spans residues 480–500 (GTTLLWQAFWECVVVAWVYGA). The Cytoplasmic portion of the chain corresponds to 501–520 (DRFMDDIACMIGYRPCPWMK). A helical membrane pass occupies residues 521–541 (WCWSFFTPLVCMGIFIFNVVY). Over 542-560 (YEPLVYNNTYVYPWWGEAM) the chain is Extracellular. N548 is a glycosylation site (N-linked (GlcNAc...) asparagine). Residues 561–581 (GWAFALSSMLCVPLHLLGCLL) form a helical membrane-spanning segment. Residues 582–635 (RAKGTMAERWQHLTQPIWGLHHLEYRAQDADVRGLTTLTPVSESSKVVVVESVM) are Cytoplasmic-facing. 2 positions are modified to phosphothreonine: T617 and T620. S623 carries the post-translational modification Phosphoserine.

It belongs to the sodium:neurotransmitter symporter (SNF) (TC 2.A.22) family. SLC6A8 subfamily. In terms of processing, glycosylated. As to expression, predominantly expressed in skeletal muscle and kidney. Also found in brain, heart, colon, testis and prostate.

It localises to the cell membrane. It is found in the apical cell membrane. The enzyme catalyses creatine(out) + chloride(out) + 2 Na(+)(out) = creatine(in) + chloride(in) + 2 Na(+)(in). Its function is as follows. Creatine:sodium symporter which mediates the uptake of creatine. Plays an important role in supplying creatine to the brain via the blood-brain barrier. This Homo sapiens (Human) protein is Sodium- and chloride-dependent creatine transporter 1 (SLC6A8).